A 282-amino-acid chain; its full sequence is Bacterial lipoprotein FTN_1103 (282 aa).

The signal sequence occupies residues 1–28; the sequence is MKYGNLMMTKKKLLIGMVTISGIVILGS. Cys-29 carries N-palmitoyl cysteine lipidation. The S-diacylglycerol cysteine moiety is linked to residue Cys-29.

It localises to the cell membrane. Stimulates the host immune inflammatory signaling system allowing the host to combat the bacteria. Stimulates mouse interleukin-6 (Il6) production. This is Bacterial lipoprotein FTN_1103 from Francisella tularensis subsp. novicida (strain U112).